The chain runs to 605 residues: Dynein axonemal intermediate chain 2 (605 aa).

WD repeat units follow at residues 150-203 (KTIN…IWDL), 208-246 (KPEL…CWDT), 253-294 (AELS…WWDI), 301-347 (TEVV…SCNR), 355-393 (KIVC…IWSE), 399-437 (SIMW…IWDF), and 443-481 (DPTL…LLEV). A disordered region spans residues 568–605 (IKLTPVPQQPSPEEDQVVEEGEEAAGEEGDEEVEEDLA). Residues 579 to 605 (PEEDQVVEEGEEAAGEEGDEEVEEDLA) are compositionally biased toward acidic residues.

It belongs to the dynein intermediate chain family. Consists of at least two heavy chains and a number of intermediate and light chains. Interacts with DNAAF2. Interacts with DNAAF6/PIH1D3. Interacts with HEATR2; probably involved in outer arm dynein assembly. Interacts with CFAP53. In terms of tissue distribution, highly expressed in trachea and testis. Expressed in respiratory ciliated cells (at protein level).

It is found in the cytoplasm. It localises to the cytoskeleton. Its subcellular location is the cilium axoneme. The protein resides in the dynein axonemal particle. Part of the dynein complex of respiratory cilia. The sequence is that of Dynein axonemal intermediate chain 2 from Homo sapiens (Human).